We begin with the raw amino-acid sequence, 288 residues long: NAD(P)H-hydrate epimerase (288 aa).

A mitochondrion-targeting transit peptide spans methionine 1 to glutamate 48. Residues alanine 65–leucine 275 enclose the YjeF N-terminal domain. A (6S)-NADPHX-binding site is contributed by asparagine 119–aspartate 123. Asparagine 120 is a K(+) binding site. Lysine 144 is modified (N6-succinyllysine). Aspartate 185 is a binding site for K(+). Residues glycine 189–aspartate 195 and aspartate 218 each bind (6S)-NADPHX. Serine 221 is a binding site for K(+).

The protein belongs to the NnrE/AIBP family. As to quaternary structure, homodimer. Interacts with APOA1 and APOA2. K(+) serves as cofactor. Post-translationally, undergoes physiological phosphorylation during sperm capacitation, downstream to PKA activation.

The protein resides in the mitochondrion. It localises to the secreted. The catalysed reaction is (6R)-NADHX = (6S)-NADHX. The enzyme catalyses (6R)-NADPHX = (6S)-NADPHX. In terms of biological role, catalyzes the epimerization of the S- and R-forms of NAD(P)HX, a damaged form of NAD(P)H that is a result of enzymatic or heat-dependent hydration. This is a prerequisite for the S-specific NAD(P)H-hydrate dehydratase to allow the repair of both epimers of NAD(P)HX. Accelerates cholesterol efflux from endothelial cells to high-density lipoprotein (HDL) and thereby regulates angiogenesis. The chain is NAD(P)H-hydrate epimerase from Canis lupus familiaris (Dog).